The sequence spans 343 residues: 4-hydroxythreonine-4-phosphate dehydrogenase (343 aa).

Positions 141 and 142 each coordinate substrate. The a divalent metal cation site is built by His175, His220, and His275. Residues Lys283, Asn292, and Arg301 each contribute to the substrate site.

The protein belongs to the PdxA family. In terms of assembly, homodimer. It depends on Zn(2+) as a cofactor. Requires Mg(2+) as cofactor. The cofactor is Co(2+).

It localises to the cytoplasm. It catalyses the reaction 4-(phosphooxy)-L-threonine + NAD(+) = 3-amino-2-oxopropyl phosphate + CO2 + NADH. It functions in the pathway cofactor biosynthesis; pyridoxine 5'-phosphate biosynthesis; pyridoxine 5'-phosphate from D-erythrose 4-phosphate: step 4/5. Catalyzes the NAD(P)-dependent oxidation of 4-(phosphooxy)-L-threonine (HTP) into 2-amino-3-oxo-4-(phosphooxy)butyric acid which spontaneously decarboxylates to form 3-amino-2-oxopropyl phosphate (AHAP). This is 4-hydroxythreonine-4-phosphate dehydrogenase from Janthinobacterium sp. (strain Marseille) (Minibacterium massiliensis).